A 491-amino-acid polypeptide reads, in one-letter code: Protein nucleotidyltransferase YdiU (491 aa).

The ATP site is built by Gly-94, Gly-96, Arg-97, Lys-117, Asp-129, Gly-130, Arg-180, and Arg-187. Asp-256 acts as the Proton acceptor in catalysis. The Mg(2+) site is built by Asn-257 and Asp-266. Asp-266 contributes to the ATP binding site.

This sequence belongs to the SELO family. Mg(2+) serves as cofactor. Mn(2+) is required as a cofactor.

It catalyses the reaction L-seryl-[protein] + ATP = 3-O-(5'-adenylyl)-L-seryl-[protein] + diphosphate. It carries out the reaction L-threonyl-[protein] + ATP = 3-O-(5'-adenylyl)-L-threonyl-[protein] + diphosphate. The enzyme catalyses L-tyrosyl-[protein] + ATP = O-(5'-adenylyl)-L-tyrosyl-[protein] + diphosphate. The catalysed reaction is L-histidyl-[protein] + UTP = N(tele)-(5'-uridylyl)-L-histidyl-[protein] + diphosphate. It catalyses the reaction L-seryl-[protein] + UTP = O-(5'-uridylyl)-L-seryl-[protein] + diphosphate. It carries out the reaction L-tyrosyl-[protein] + UTP = O-(5'-uridylyl)-L-tyrosyl-[protein] + diphosphate. Functionally, nucleotidyltransferase involved in the post-translational modification of proteins. It can catalyze the addition of adenosine monophosphate (AMP) or uridine monophosphate (UMP) to a protein, resulting in modifications known as AMPylation and UMPylation. The polypeptide is Protein nucleotidyltransferase YdiU (Clostridium botulinum (strain Alaska E43 / Type E3)).